Here is a 76-residue protein sequence, read N- to C-terminus: Envelope small membrane protein (76 aa).

Residues methionine 1–serine 16 lie on the Virion surface side of the membrane. A helical membrane pass occupies residues valine 17–leucine 37. Residues arginine 38–valine 76 lie on the Intravirion side of the membrane.

Belongs to the betacoronaviruses E protein family. As to quaternary structure, homopentamer. Interacts with membrane protein M in the budding compartment of the host cell, which is located between endoplasmic reticulum and the Golgi complex. Interacts with Nucleoprotein.

It is found in the host Golgi apparatus membrane. Plays a central role in virus morphogenesis and assembly. Acts as a viroporin and self-assembles in host membranes forming pentameric protein-lipid pores that allow ion transport. Also plays a role in the induction of apoptosis. The sequence is that of Envelope small membrane protein from Rhinolophus sinicus (Chinese rufous horseshoe bat).